The primary structure comprises 165 residues: Nucleotide-binding protein Cagg_1607 (165 aa).

This sequence belongs to the YajQ family.

In terms of biological role, nucleotide-binding protein. The chain is Nucleotide-binding protein Cagg_1607 from Chloroflexus aggregans (strain MD-66 / DSM 9485).